Reading from the N-terminus, the 81-residue chain is Large ribosomal subunit protein bL31B (81 aa).

Belongs to the bacterial ribosomal protein bL31 family. Type B subfamily. In terms of assembly, part of the 50S ribosomal subunit.

The polypeptide is Large ribosomal subunit protein bL31B (Listeria innocua serovar 6a (strain ATCC BAA-680 / CLIP 11262)).